A 321-amino-acid polypeptide reads, in one-letter code: Olfactory receptor 52N2 (321 aa).

The Extracellular segment spans residues 1–27 (MSGDNSSSLTPGFFILNGVPGLEATHI). N-linked (GlcNAc...) asparagine glycosylation occurs at asparagine 5. The helical transmembrane segment at 28–48 (WISLPFCFMYIIAVVGNCGLI) threads the bilayer. At 49–56 (CLISHEEA) the chain is on the cytoplasmic side. The helical transmembrane segment at 57–77 (LHRPMYYFLALLSFTDVTLCT) threads the bilayer. Topologically, residues 78–101 (TMVPNMLCIFWFNLKEIDFNACLA) are extracellular. A disulfide bond links cysteine 99 and cysteine 191. A helical transmembrane segment spans residues 102–122 (QMFFVHMLTGMESGVLMLMAL). Residues 123 to 141 (DRYVAICYPLRYATILTNP) are Cytoplasmic-facing. A helical transmembrane segment spans residues 142–162 (VIAKAGLATFLRNVMLIIPFT). The Extracellular portion of the chain corresponds to 163–198 (LLTKRLPYCRGNFIPHTYCDHMSVAKVSCGNFKVNA). Residues 199-219 (IYGLMVALLIGVFDICCISVS) traverse the membrane as a helical segment. The Cytoplasmic portion of the chain corresponds to 220–239 (YTMILQAVMSLSSADARHKA). Residues 240 to 260 (FSTCTSHMCSIVITYVAAFFT) traverse the membrane as a helical segment. Residues 261–276 (FFTHRFVGHNIPNHIH) lie on the Extracellular side of the membrane. The chain crosses the membrane as a helical span at residues 277–297 (IIVANLYLLLPPTMNPIVYGV). Topologically, residues 298–321 (KTKQIQEGVIKFLLGDKVSFTYDK) are cytoplasmic.

The protein belongs to the G-protein coupled receptor 1 family.

It is found in the cell membrane. In terms of biological role, odorant receptor. The chain is Olfactory receptor 52N2 (OR52N2) from Homo sapiens (Human).